Reading from the N-terminus, the 98-residue chain is NADH-ubiquinone oxidoreductase chain 4L (98 aa).

3 helical membrane-spanning segments follow: residues 1 to 21, 29 to 49, and 61 to 81; these read MSLTYMNILVAFVISLTGLLM, SLLCLEGMMLSLFVMVTITIL, and IILLVFAACEAALGLALLVMV.

It belongs to the complex I subunit 4L family. As to quaternary structure, core subunit of respiratory chain NADH dehydrogenase (Complex I) which is composed of 45 different subunits.

It is found in the mitochondrion inner membrane. The enzyme catalyses a ubiquinone + NADH + 5 H(+)(in) = a ubiquinol + NAD(+) + 4 H(+)(out). Functionally, core subunit of the mitochondrial membrane respiratory chain NADH dehydrogenase (Complex I) which catalyzes electron transfer from NADH through the respiratory chain, using ubiquinone as an electron acceptor. Part of the enzyme membrane arm which is embedded in the lipid bilayer and involved in proton translocation. The sequence is that of NADH-ubiquinone oxidoreductase chain 4L (MT-ND4L) from Mystacina tuberculata (New Zealand lesser short-tailed bat).